A 126-amino-acid polypeptide reads, in one-letter code: Large ribosomal subunit protein uL29 (126 aa).

The protein belongs to the universal ribosomal protein uL29 family.

This is Large ribosomal subunit protein uL29 (rpl35) from Dictyostelium discoideum (Social amoeba).